Here is an 80-residue protein sequence, read N- to C-terminus: Small ribosomal subunit protein uS17c (80 aa).

It belongs to the universal ribosomal protein uS17 family. As to quaternary structure, part of the 30S ribosomal subunit.

Its subcellular location is the plastid. The protein resides in the chloroplast. Functionally, one of the primary rRNA binding proteins, it binds specifically to the 5'-end of 16S ribosomal RNA. The protein is Small ribosomal subunit protein uS17c (rps17) of Gracilaria tenuistipitata var. liui (Red alga).